A 434-amino-acid chain; its full sequence is Glutamyl-tRNA reductase (434 aa).

Residues 49 to 52 (TCNR), S109, 114 to 116 (EPQ), and Q120 each bind substrate. Residue C50 is the Nucleophile of the active site. 189-194 (GAGEMC) contributes to the NADP(+) binding site.

It belongs to the glutamyl-tRNA reductase family. Homodimer.

It catalyses the reaction (S)-4-amino-5-oxopentanoate + tRNA(Glu) + NADP(+) = L-glutamyl-tRNA(Glu) + NADPH + H(+). It functions in the pathway porphyrin-containing compound metabolism; protoporphyrin-IX biosynthesis; 5-aminolevulinate from L-glutamyl-tRNA(Glu): step 1/2. In terms of biological role, catalyzes the NADPH-dependent reduction of glutamyl-tRNA(Glu) to glutamate 1-semialdehyde (GSA). This is Glutamyl-tRNA reductase from Geotalea uraniireducens (strain Rf4) (Geobacter uraniireducens).